Here is a 209-residue protein sequence, read N- to C-terminus: Orotate phosphoribosyltransferase (209 aa).

Residues Arg96, Lys100, His102, and 122 to 130 (EDLISTGKS) each bind 5-phospho-alpha-D-ribose 1-diphosphate. Ser126 serves as a coordination point for orotate.

It belongs to the purine/pyrimidine phosphoribosyltransferase family. PyrE subfamily. Homodimer. It depends on Mg(2+) as a cofactor.

It carries out the reaction orotidine 5'-phosphate + diphosphate = orotate + 5-phospho-alpha-D-ribose 1-diphosphate. The protein operates within pyrimidine metabolism; UMP biosynthesis via de novo pathway; UMP from orotate: step 1/2. Catalyzes the transfer of a ribosyl phosphate group from 5-phosphoribose 1-diphosphate to orotate, leading to the formation of orotidine monophosphate (OMP). This is Orotate phosphoribosyltransferase from Coxiella burnetii (strain RSA 493 / Nine Mile phase I).